Reading from the N-terminus, the 693-residue chain is Glycine--tRNA ligase beta subunit (693 aa).

Belongs to the class-II aminoacyl-tRNA synthetase family. Tetramer of two alpha and two beta subunits.

It localises to the cytoplasm. It carries out the reaction tRNA(Gly) + glycine + ATP = glycyl-tRNA(Gly) + AMP + diphosphate. The protein is Glycine--tRNA ligase beta subunit of Vibrio vulnificus (strain CMCP6).